The sequence spans 356 residues: Icosanoyl-CoA 5-desaturase (356 aa).

The chain crosses the membrane as a helical span at residues 5–25 (LYFPISISLSLSLEAMASFIA). The segment at 38 to 58 (LDPKIPTKPEPKTETPKPKDD) is disordered. Over residues 42–58 (IPTKPEPKTETPKPKDD) the composition is skewed to basic and acidic residues. 2 helical membrane-spanning segments follow: residues 88-108 (NAVTLLVLHALAAMAPFYFSW) and 111-131 (FWISFILLGFASGVLGITLCF). Residues 132–137 (HRCLTH) carry the Histidine box-1 motif. A Histidine box-2 motif is present at residues 169–173 (HRYHH). A helical membrane pass occupies residues 236-256 (ALIALLYYVGGFPYIVWGMGF). The Histidine box-3 motif lies at 302-306 (HNNHH).

It belongs to the fatty acid desaturase type 1 family. It depends on Fe(2+) as a cofactor.

It localises to the membrane. It catalyses the reaction eicosanoyl-CoA + 2 Fe(II)-[cytochrome b5] + O2 + 2 H(+) = (5Z)-eicosenoyl-CoA + 2 Fe(III)-[cytochrome b5] + 2 H2O. The protein operates within lipid metabolism; monounsaturated fatty acid biosynthesis. Functionally, desaturase involved in the biosynthesis of (5Z)-icos-5-enoate, an unusual monounsaturated fatty acid that makes up to 60% of the total fatty acids in Limnanthes sp. seed oil. Only acts on saturated fatty acids. The polypeptide is Icosanoyl-CoA 5-desaturase (Limnanthes douglasii (Douglas' meadowfoam)).